A 694-amino-acid polypeptide reads, in one-letter code: Elongation factor G (694 aa).

The tr-type G domain maps to 8–287 (EDYRNFGIMA…AVVEFLPAPT (280 aa)). Residues 17–24 (AHIDAGKT), 86–90 (DTPGH), and 140–143 (NKMD) contribute to the GTP site.

Belongs to the TRAFAC class translation factor GTPase superfamily. Classic translation factor GTPase family. EF-G/EF-2 subfamily.

Its subcellular location is the cytoplasm. In terms of biological role, catalyzes the GTP-dependent ribosomal translocation step during translation elongation. During this step, the ribosome changes from the pre-translocational (PRE) to the post-translocational (POST) state as the newly formed A-site-bound peptidyl-tRNA and P-site-bound deacylated tRNA move to the P and E sites, respectively. Catalyzes the coordinated movement of the two tRNA molecules, the mRNA and conformational changes in the ribosome. The chain is Elongation factor G from Brucella melitensis biotype 1 (strain ATCC 23456 / CCUG 17765 / NCTC 10094 / 16M).